A 515-amino-acid chain; its full sequence is Maturase K (515 aa).

Belongs to the intron maturase 2 family. MatK subfamily.

The protein localises to the plastid. The protein resides in the chloroplast. In terms of biological role, usually encoded in the trnK tRNA gene intron. Probably assists in splicing its own and other chloroplast group II introns. This Picea engelmannii (Engelmann's spruce) protein is Maturase K.